Consider the following 236-residue polypeptide: Biosynthetic peptidoglycan transglycosylase (236 aa).

A helical transmembrane segment spans residues 17-37 (IVILVALALLALPYLLTILYG).

Belongs to the glycosyltransferase 51 family.

Its subcellular location is the cell inner membrane. It catalyses the reaction [GlcNAc-(1-&gt;4)-Mur2Ac(oyl-L-Ala-gamma-D-Glu-L-Lys-D-Ala-D-Ala)](n)-di-trans,octa-cis-undecaprenyl diphosphate + beta-D-GlcNAc-(1-&gt;4)-Mur2Ac(oyl-L-Ala-gamma-D-Glu-L-Lys-D-Ala-D-Ala)-di-trans,octa-cis-undecaprenyl diphosphate = [GlcNAc-(1-&gt;4)-Mur2Ac(oyl-L-Ala-gamma-D-Glu-L-Lys-D-Ala-D-Ala)](n+1)-di-trans,octa-cis-undecaprenyl diphosphate + di-trans,octa-cis-undecaprenyl diphosphate + H(+). It functions in the pathway cell wall biogenesis; peptidoglycan biosynthesis. Peptidoglycan polymerase that catalyzes glycan chain elongation from lipid-linked precursors. In Rhodopseudomonas palustris (strain ATCC BAA-98 / CGA009), this protein is Biosynthetic peptidoglycan transglycosylase.